A 159-amino-acid polypeptide reads, in one-letter code: uncharacterized protein (159 aa).

The next 2 membrane-spanning stretches (helical) occupy residues 17–37 and 40–60; these read ALFI…TILV and LLQF…FKKY.

The protein localises to the cell membrane. This is an uncharacterized protein from Borreliella burgdorferi (strain ATCC 35210 / DSM 4680 / CIP 102532 / B31) (Borrelia burgdorferi).